The following is a 188-amino-acid chain: MATAGMNDVKNGMKILVNNEPAVISETEFIKPGKGQAFTRVRYRFIKSGRTVEMTMKATDDVEVADVVDTNMDYMYSDGEYWHFMDPETFEQVQADKAGMGGAEKWLKGEESCIVTLFNGSPIFVQPPNFVELKITETDPGVRGDTSGGGGKPATLETGAVVRVPLFVNQDEIIKVDTRSGEYSSRVK.

Lysine 34 is modified (N6-(3,6-diaminohexanoyl)-5-hydroxylysine).

Belongs to the elongation factor P family. May be beta-lysylated on the epsilon-amino group of Lys-34 by the combined action of EpmA and EpmB, and then hydroxylated on the C5 position of the same residue by EpmC (if this protein is present). Lysylation is critical for the stimulatory effect of EF-P on peptide-bond formation. The lysylation moiety may extend toward the peptidyltransferase center and stabilize the terminal 3-CCA end of the tRNA. Hydroxylation of the C5 position on Lys-34 may allow additional potential stabilizing hydrogen-bond interactions with the P-tRNA.

The protein resides in the cytoplasm. It participates in protein biosynthesis; polypeptide chain elongation. Involved in peptide bond synthesis. Alleviates ribosome stalling that occurs when 3 or more consecutive Pro residues or the sequence PPG is present in a protein, possibly by augmenting the peptidyl transferase activity of the ribosome. Modification of Lys-34 is required for alleviation. The protein is Elongation factor P of Stenotrophomonas maltophilia (strain R551-3).